Reading from the N-terminus, the 250-residue chain is Triosephosphate isomerase (250 aa).

9-11 (NWK) is a binding site for substrate. His95 functions as the Electrophile in the catalytic mechanism. The active-site Proton acceptor is Glu167. Substrate-binding positions include Gly173, Ser213, and 234-235 (GG).

It belongs to the triosephosphate isomerase family. As to quaternary structure, homodimer.

Its subcellular location is the cytoplasm. It catalyses the reaction D-glyceraldehyde 3-phosphate = dihydroxyacetone phosphate. It participates in carbohydrate biosynthesis; gluconeogenesis. It functions in the pathway carbohydrate degradation; glycolysis; D-glyceraldehyde 3-phosphate from glycerone phosphate: step 1/1. Its function is as follows. Involved in the gluconeogenesis. Catalyzes stereospecifically the conversion of dihydroxyacetone phosphate (DHAP) to D-glyceraldehyde-3-phosphate (G3P). The polypeptide is Triosephosphate isomerase (Exiguobacterium sibiricum (strain DSM 17290 / CCUG 55495 / CIP 109462 / JCM 13490 / 255-15)).